A 90-amino-acid chain; its full sequence is DNA-binding protein HU-alpha (90 aa).

The protein belongs to the bacterial histone-like protein family. In terms of assembly, heterodimer of an alpha and a beta chain.

Functionally, histone-like DNA-binding protein which is capable of wrapping DNA to stabilize it, and thus to prevent its denaturation under extreme environmental conditions. This chain is DNA-binding protein HU-alpha (hupA), found in Aeromonas hydrophila.